Consider the following 296-residue polypeptide: MGSTLFKTIALIGKHKNPDIMTPLLNLAEYLTDRGTSVVLDDLTAAHIGKNQYPVVALEEIGRQADLAIVLGGDGTMLNIARTLVPFSVPLIGINQGRLGFLTDLTVDTMYATLNDMLAGQFIVENRMLLTTEVTRHGESVFKELAFNDVVLHRGISSGMIELEVHINGEYVYSLRSDGLIIATPTGSTAYALSSGGPILHPGLNLMILVPVCPHTLSNRPIVIGADAVIEIKIHYTTETKIYTDSHSWFDLGEHDRVLVRRCPETIKLLHPVHHSYYRMLREKLGWSSILQKNSR.

Aspartate 74 (proton acceptor) is an active-site residue. Residues 74–75, 148–149, arginine 176, aspartate 178, and 189–194 contribute to the NAD(+) site; these read DG, ND, and TAYALS.

This sequence belongs to the NAD kinase family. Requires a divalent metal cation as cofactor.

Its subcellular location is the cytoplasm. It carries out the reaction NAD(+) + ATP = ADP + NADP(+) + H(+). In terms of biological role, involved in the regulation of the intracellular balance of NAD and NADP, and is a key enzyme in the biosynthesis of NADP. Catalyzes specifically the phosphorylation on 2'-hydroxyl of the adenosine moiety of NAD to yield NADP. The chain is NAD kinase from Nitrosomonas eutropha (strain DSM 101675 / C91 / Nm57).